Here is a 150-residue protein sequence, read N- to C-terminus: 3-hydroxyacyl-[acyl-carrier-protein] dehydratase FabZ (150 aa).

Histidine 51 is an active-site residue.

This sequence belongs to the thioester dehydratase family. FabZ subfamily.

Its subcellular location is the cytoplasm. It catalyses the reaction a (3R)-hydroxyacyl-[ACP] = a (2E)-enoyl-[ACP] + H2O. In terms of biological role, involved in unsaturated fatty acids biosynthesis. Catalyzes the dehydration of short chain beta-hydroxyacyl-ACPs and long chain saturated and unsaturated beta-hydroxyacyl-ACPs. This is 3-hydroxyacyl-[acyl-carrier-protein] dehydratase FabZ from Legionella pneumophila subsp. pneumophila (strain Philadelphia 1 / ATCC 33152 / DSM 7513).